Reading from the N-terminus, the 236-residue chain is 2,3,4,5-tetrahydropyridine-2,6-dicarboxylate N-acetyltransferase (236 aa).

Belongs to the transferase hexapeptide repeat family. DapH subfamily.

The enzyme catalyses (S)-2,3,4,5-tetrahydrodipicolinate + acetyl-CoA + H2O = L-2-acetamido-6-oxoheptanedioate + CoA. The protein operates within amino-acid biosynthesis; L-lysine biosynthesis via DAP pathway; LL-2,6-diaminopimelate from (S)-tetrahydrodipicolinate (acetylase route): step 1/3. Its function is as follows. Catalyzes the transfer of an acetyl group from acetyl-CoA to tetrahydrodipicolinate. This chain is 2,3,4,5-tetrahydropyridine-2,6-dicarboxylate N-acetyltransferase, found in Geobacillus sp. (strain WCH70).